The sequence spans 316 residues: Small neutral protease regulatory protein (316 aa).

An HTH lysR-type domain is found at 1 to 56; that stretch reads MRHLRALCAIADTGSVRRAARELGVSQPALTTQLRRIEQSLGAELFHRGRDGCRPT. Positions 16–35 form a DNA-binding region, H-T-H motif; that stretch reads VRRAARELGVSQPALTTQLR.

The protein belongs to the LysR transcriptional regulatory family.

Functionally, transcriptional trans-activator of the gene (mprA) for the small neutral protease. In Streptomyces coelicolor, this protein is Small neutral protease regulatory protein (mprR).